The following is a 215-amino-acid chain: MENLAWSPFKSLTAEQREQIDRFREQLLRFNQRVNLISPETEDTFRTRHLLHCLTLTARDFPAGCTVVDWGTGGGLPAIPLAICHPEATVVGVDSVGKKSRAVRTIARRLGLDNCFTWNGRADEWTGEAHYSVSRATAPLADLWAWHRRVAVSPDDPNGDAWPPGLLALKGGDLSDEVAALHAADPDARVERHSLNDLLGRNGFFGEKEIVAVRS.

G71, L76, and R135 together coordinate S-adenosyl-L-methionine.

This sequence belongs to the methyltransferase superfamily. RNA methyltransferase RsmG family.

Its subcellular location is the cytoplasm. Specifically methylates the N7 position of a guanine in 16S rRNA. This chain is Ribosomal RNA small subunit methyltransferase G, found in Salinibacter ruber (strain DSM 13855 / M31).